Here is a 469-residue protein sequence, read N- to C-terminus: ATP synthase subunit beta (469 aa).

155-162 is a binding site for ATP; the sequence is GGAGVGKT.

The protein belongs to the ATPase alpha/beta chains family. As to quaternary structure, F-type ATPases have 2 components, CF(1) - the catalytic core - and CF(0) - the membrane proton channel. CF(1) has five subunits: alpha(3), beta(3), gamma(1), delta(1), epsilon(1). CF(0) has three main subunits: a(1), b(2) and c(9-12). The alpha and beta chains form an alternating ring which encloses part of the gamma chain. CF(1) is attached to CF(0) by a central stalk formed by the gamma and epsilon chains, while a peripheral stalk is formed by the delta and b chains.

It localises to the cell inner membrane. The enzyme catalyses ATP + H2O + 4 H(+)(in) = ADP + phosphate + 5 H(+)(out). Functionally, produces ATP from ADP in the presence of a proton gradient across the membrane. The catalytic sites are hosted primarily by the beta subunits. The protein is ATP synthase subunit beta of Syntrophobacter fumaroxidans (strain DSM 10017 / MPOB).